The primary structure comprises 240 residues: Putative peptidoglycan hydrolase Rv2525c (240 aa).

Positions 1 to 33 (MSVSRRDVLKFAAATPGVLGLGVVASSLRAAPA) form a signal peptide, tat-type signal.

In terms of processing, predicted to be exported by the Tat system. The position of the signal peptide cleavage has not been experimentally proven.

Its subcellular location is the secreted. The catalysed reaction is Hydrolysis of (1-&gt;4)-beta-linkages between N-acetylmuramic acid and N-acetyl-D-glucosamine residues in a peptidoglycan and between N-acetyl-D-glucosamine residues in chitodextrins.. It functions in the pathway cell wall degradation; peptidoglycan degradation. Its function is as follows. May function as a peptidoglycan hydrolase with glycosidase activity. In vitro, displays esterase activity toward p-nitrophenyl esters of various acyl chain length (C4 to C16), with a preference for p-nitrophenyl butyrate (C4). The chain is Putative peptidoglycan hydrolase Rv2525c from Mycobacterium tuberculosis (strain ATCC 25618 / H37Rv).